A 248-amino-acid polypeptide reads, in one-letter code: MKLNVSYPATGCQKLFEVVDEHKLRVFYEKRMGQVVEADILGDEWKGYQLRIAGGNDKQGFPMKQGVLTHGRVRLLLKKGHSCYRPRRTGERKRKSVRGCIVDANMSVLALVVLKKGEKDIPGLTDTTIPRRLGPKRASKIRKLYNLSKEDDVRRFVVRRPLPAKDNKKATSKAPKIQRLITPVVLQRKHRRIALKKKRQIASKEASADYAKLLVQRKKESKAKREEAKRRRSASIRESKSSVSSDKK.

The interval 215-248 (VQRKKESKAKREEAKRRRSASIRESKSSVSSDKK) is disordered. A compositionally biased stretch (basic and acidic residues) spans 223 to 248 (AKREEAKRRRSASIRESKSSVSSDKK). Phosphoserine occurs at positions 233, 235, 239, 242, 244, and 245.

Belongs to the eukaryotic ribosomal protein eS6 family. In terms of assembly, component of the small ribosomal subunit. Part of the small subunit (SSU) processome, composed of more than 70 proteins and the RNA chaperone small nucleolar RNA (snoRNA) U3. In terms of processing, ribosomal protein S6 is the major substrate of protein kinases in eukaryote ribosomes. The phosphorylation is stimulated by growth factors, tumor promoting agents, and mitogens. It is dephosphorylated at growth arrest.

The protein resides in the cytoplasm. Its subcellular location is the nucleus. The protein localises to the nucleolus. In terms of biological role, component of the 40S small ribosomal subunit. Plays an important role in controlling cell growth and proliferation through the selective translation of particular classes of mRNA. Part of the small subunit (SSU) processome, first precursor of the small eukaryotic ribosomal subunit. During the assembly of the SSU processome in the nucleolus, many ribosome biogenesis factors, an RNA chaperone and ribosomal proteins associate with the nascent pre-rRNA and work in concert to generate RNA folding, modifications, rearrangements and cleavage as well as targeted degradation of pre-ribosomal RNA by the RNA exosome. The chain is Small ribosomal subunit protein eS6 (RpS6) from Drosophila melanogaster (Fruit fly).